The sequence spans 47 residues: uncharacterized protein (47 aa).

The disordered stretch occupies residues 22 to 47 (VGPRTKRANQASPPVGRHSSRLMCPG).

This is an uncharacterized protein from Saccharomyces cerevisiae (strain ATCC 204508 / S288c) (Baker's yeast).